A 693-amino-acid polypeptide reads, in one-letter code: Elongation factor G (693 aa).

Positions Glu-8–Leu-282 constitute a tr-type G domain. GTP is bound by residues Ala-17–Thr-24, Asp-81–His-85, and Asn-135–Asp-138.

Belongs to the TRAFAC class translation factor GTPase superfamily. Classic translation factor GTPase family. EF-G/EF-2 subfamily.

It is found in the cytoplasm. In terms of biological role, catalyzes the GTP-dependent ribosomal translocation step during translation elongation. During this step, the ribosome changes from the pre-translocational (PRE) to the post-translocational (POST) state as the newly formed A-site-bound peptidyl-tRNA and P-site-bound deacylated tRNA move to the P and E sites, respectively. Catalyzes the coordinated movement of the two tRNA molecules, the mRNA and conformational changes in the ribosome. The sequence is that of Elongation factor G from Staphylococcus aureus (strain Mu3 / ATCC 700698).